Consider the following 161-residue polypeptide: Anaerobic nitrite reductase GLB1 (161 aa).

One can recognise a Globin domain in the interval 9-157 (VFTEEQEALV…LVAAIKSEMK (149 aa)). Residues 42-46 (EIAPS) carry the Homodimerization motif. Positions 52, 66, 70, 100, and 105 each coordinate heme b. The short motif at 112-123 (NEHFETRFALLE) is the Homodimerization element.

The protein belongs to the plant globin family. In terms of assembly, homodimer. Requires heme b as cofactor. Root specific.

Its subcellular location is the cytoplasm. The protein resides in the nucleus. It carries out the reaction Fe(III)-heme b-[protein] + nitric oxide + H2O = Fe(II)-heme b-[protein] + nitrite + 2 H(+). Its function is as follows. Phytoglobin that reduces nitrite to nitric oxide (NO) under anoxic conditions (e.g. during flooding or in waterlogged soil) and upon root nodulation. Required for general plant development and during nodulation, especially for the onset of symbiosis. Monitors nitric oxide (NO) levels during early phase of the nitrogen-fixing symbiosis and buffers oxygen in functioning nodules. May not function as an oxygen storage or transport protein. Has an unusually high affinity for O(2) through a hexacoordinate heme iron because of a very low dissociation constant. The chain is Anaerobic nitrite reductase GLB1 (GLB1) from Trema tomentosum (Peach-leaf poison-bush).